We begin with the raw amino-acid sequence, 419 residues long: Transcription termination factor Rho (419 aa).

The region spanning Gly48 to His123 is the Rho RNA-BD domain. Residues Gly169–Ala174, Lys181–Val186, and Arg212 each bind ATP.

It belongs to the Rho family. In terms of assembly, homohexamer. The homohexamer assembles into an open ring structure.

In terms of biological role, facilitates transcription termination by a mechanism that involves Rho binding to the nascent RNA, activation of Rho's RNA-dependent ATPase activity, and release of the mRNA from the DNA template. The sequence is that of Transcription termination factor Rho from Neisseria gonorrhoeae.